The sequence spans 138 residues: Basic phospholipase A2 homolog bothropstoxin-II (138 aa).

The first 16 residues, Met1–Gly16, serve as a signal peptide directing secretion. Cystine bridges form between Cys42–Cys131, Cys44–Cys60, Cys59–Cys111, Cys65–Cys138, Cys66–Cys104, Cys73–Cys97, and Cys91–Cys102. Positions Lys121–Lys133 are important for membrane-damaging activities in eukaryotes and bacteria; heparin-binding.

The protein belongs to the phospholipase A2 family. Group II subfamily. D49 sub-subfamily. In terms of assembly, homodimer; non-covalently linked (probable alternative/compact dimer conformation). Expressed by the venom gland.

The protein localises to the secreted. Snake venom phospholipase A2 (PLA2) that shows low enzymatic activity even tough it conserves the catalytic residues. Shows a strong myotoxic activity and induces indirect hemolysis, anticoagulant properties, and cytotoxic activities. In vivo, it induces muscle necrosis, accompanied by polymorphonuclear cell infiltration, and edema in the mouse paw. It exerts its function even in the absence of extracellular calcium, indicating it is not a calcium-dependent enzyme. A model of myotoxic mechanism has been proposed: an apo Lys49-PLA2 is activated by the entrance of a hydrophobic molecule (e.g. fatty acid) at the hydrophobic channel of the protein leading to a reorientation of a monomer. This reorientation causes a transition between 'inactive' to 'active' states, causing alignment of C-terminal and membrane-docking sites (MDoS) side-by-side and putting the membrane-disruption sites (MDiS) in the same plane, exposed to solvent and in a symmetric position for both monomers. The MDoS region stabilizes the toxin on membrane by the interaction of charged residues with phospholipid head groups. Subsequently, the MDiS region destabilizes the membrane with penetration of hydrophobic residues. This insertion causes a disorganization of the membrane, allowing an uncontrolled influx of ions (i.e. calcium and sodium), and eventually triggering irreversible intracellular alterations and cell death. The polypeptide is Basic phospholipase A2 homolog bothropstoxin-II (Bothrops jararacussu (Jararacussu)).